The chain runs to 477 residues: Delayed-rectifier potassium channel regulatory subunit KCNS2 (477 aa).

The Cytoplasmic segment spans residues 1–184 (MTGQSLWDVS…LALDNPGYSV (184 aa)). Residues 185–206 (LSRVFSILSILVVMGSIITMCL) form a helical membrane-spanning segment. Over 207-225 (NSLPDFQIPDSQGNPGEDP) the chain is Extracellular. Residues 226 to 248 (RFEIVEHFGIAWFTFELVARFAV) traverse the membrane as a helical segment. Over 249–259 (APDFLKFFKNA) the chain is Cytoplasmic. A helical transmembrane segment spans residues 260 to 280 (LNLIDLMSIVPFYITLVVNLV). Topologically, residues 281 to 290 (VESTPTLANL) are extracellular. The helical; Voltage-sensor transmembrane segment at 291–311 (GRVAQVLRLMRIFRILKLARH) threads the bilayer. The Cytoplasmic segment spans residues 312–326 (STGLRSLGATLKYSY). Residues 327–348 (KEVGLLLLYLSVGISIFSVVAY) traverse the membrane as a helical segment. At 349–361 (TIEKEENEGLATI) the chain is on the extracellular side. The helical intramembrane region spans 362-373 (PACWWWATVSMT). The short motif at 374–379 (TVGYGD) is the Selectivity filter element. An intramembrane segment occupies 374-381 (TVGYGDVV). At 382–388 (PGTTAGK) the chain is on the extracellular side. Residues 389-417 (LTASACILAGILVVVLPITLIFNKFSHFY) form a helical membrane-spanning segment. The Cytoplasmic portion of the chain corresponds to 418–477 (RRQKQLESAMRSCDFGDGMKEVPSVNLRDYYAHKVKSLMASLTNMSRSSPSELSLNDSLR).

The protein belongs to the potassium channel family. S (TC 1.A.1.2) subfamily. Kv9.2/KCNS2 sub-subfamily. As to quaternary structure, heterotetramer with KCNB1 and KCNB2. Does not form homomultimers.

The protein resides in the cell membrane. Functionally, potassium channel regulatory subunit that modulate the delayed rectifier voltage-gated potassium channel activity of KCNB1 and KCNB2 by altering their kinetics, expression levels, and shifting the half-inactivation potential to more polarized values. While it does not form functional channels on its own, it can form functional heterotetrameric channels with KCNB1 and KCNB2. Each regulatory subunit has unique regulatory properties that can lead to extensive inhibition, significant changes in kinetics, and/or substantial shifts in the voltage dependencies of the inactivation process. The sequence is that of Delayed-rectifier potassium channel regulatory subunit KCNS2 from Homo sapiens (Human).